The chain runs to 332 residues: MQQVVYVASPESQQIHVWQLGAQGNLTLLQTVEVPGQVQPMAIAPNKRHLYVGVRPDFRVLSYRIDEQGKLTEAGVASLPGSPTHLSTDNDGRFLFSASYSGACVSVSPIDADGIVGEPIQQLDGLEGCHSTNIDPTNTVVWAPCLKEDRIRLYDLGSVGELSIHRQAEMTTVSGAGPRHMAFHPNQRFAYCVNELDSSVDVYQLDAASGDVQKVQTLDAMPAGFSDTRWAADIHITPNGNFLYISDRTASLLSVFQISEDGSTLTLTGHQPTETQPRGFNIDHTGEFLISAGQKSQHIEVYHIDQHTGDLQPLARYAVGQGPMWVAVLALD.

It belongs to the cycloisomerase 2 family.

It catalyses the reaction 6-phospho-D-glucono-1,5-lactone + H2O = 6-phospho-D-gluconate + H(+). The protein operates within carbohydrate degradation; pentose phosphate pathway; D-ribulose 5-phosphate from D-glucose 6-phosphate (oxidative stage): step 2/3. In terms of biological role, catalyzes the hydrolysis of 6-phosphogluconolactone to 6-phosphogluconate. This chain is 6-phosphogluconolactonase, found in Pectobacterium atrosepticum (strain SCRI 1043 / ATCC BAA-672) (Erwinia carotovora subsp. atroseptica).